The sequence spans 333 residues: Holliday junction branch migration complex subunit RuvB (333 aa).

The interval 1–182 (MTNRILDMEQ…FGITGHMEYY (182 aa)) is large ATPase domain (RuvB-L). Residues Leu21, Arg22, Gly63, Lys66, Thr67, Thr68, 129-131 (EDF), Arg172, Tyr182, and Arg219 each bind ATP. Thr67 is a Mg(2+) binding site. The tract at residues 183–253 (ELADLTEIVE…ITDKALTMLD (71 aa)) is small ATPAse domain (RuvB-S). The interval 256 to 333 (REGLDYVDQK…EHLGYPYTEK (78 aa)) is head domain (RuvB-H). Residues Arg292, Arg311, Arg313, and Arg316 each contribute to the DNA site.

The protein belongs to the RuvB family. As to quaternary structure, homohexamer. Forms an RuvA(8)-RuvB(12)-Holliday junction (HJ) complex. HJ DNA is sandwiched between 2 RuvA tetramers; dsDNA enters through RuvA and exits via RuvB. An RuvB hexamer assembles on each DNA strand where it exits the tetramer. Each RuvB hexamer is contacted by two RuvA subunits (via domain III) on 2 adjacent RuvB subunits; this complex drives branch migration. In the full resolvosome a probable DNA-RuvA(4)-RuvB(12)-RuvC(2) complex forms which resolves the HJ.

It localises to the cytoplasm. It catalyses the reaction ATP + H2O = ADP + phosphate + H(+). Its function is as follows. The RuvA-RuvB-RuvC complex processes Holliday junction (HJ) DNA during genetic recombination and DNA repair, while the RuvA-RuvB complex plays an important role in the rescue of blocked DNA replication forks via replication fork reversal (RFR). RuvA specifically binds to HJ cruciform DNA, conferring on it an open structure. The RuvB hexamer acts as an ATP-dependent pump, pulling dsDNA into and through the RuvAB complex. RuvB forms 2 homohexamers on either side of HJ DNA bound by 1 or 2 RuvA tetramers; 4 subunits per hexamer contact DNA at a time. Coordinated motions by a converter formed by DNA-disengaged RuvB subunits stimulates ATP hydrolysis and nucleotide exchange. Immobilization of the converter enables RuvB to convert the ATP-contained energy into a lever motion, pulling 2 nucleotides of DNA out of the RuvA tetramer per ATP hydrolyzed, thus driving DNA branch migration. The RuvB motors rotate together with the DNA substrate, which together with the progressing nucleotide cycle form the mechanistic basis for DNA recombination by continuous HJ branch migration. Branch migration allows RuvC to scan DNA until it finds its consensus sequence, where it cleaves and resolves cruciform DNA. The chain is Holliday junction branch migration complex subunit RuvB from Streptococcus suis (strain 98HAH33).